Reading from the N-terminus, the 131-residue chain is Small ribosomal subunit protein uS8 (131 aa).

This sequence belongs to the universal ribosomal protein uS8 family. Part of the 30S ribosomal subunit. Contacts proteins S5 and S12.

Its function is as follows. One of the primary rRNA binding proteins, it binds directly to 16S rRNA central domain where it helps coordinate assembly of the platform of the 30S subunit. This is Small ribosomal subunit protein uS8 from Verminephrobacter eiseniae (strain EF01-2).